The following is a 129-amino-acid chain: Large ribosomal subunit protein uL14m (129 aa).

Belongs to the universal ribosomal protein uL14 family. Component of the mitochondrial ribosome large subunit (39S) which comprises a 16S rRNA and about 50 distinct proteins.

It is found in the mitochondrion. This Dictyostelium discoideum (Social amoeba) protein is Large ribosomal subunit protein uL14m (mrpl14).